Here is a 369-residue protein sequence, read N- to C-terminus: Peptide chain release factor 2 (369 aa).

An N5-methylglutamine modification is found at glutamine 249.

The protein belongs to the prokaryotic/mitochondrial release factor family. In terms of processing, methylated by PrmC. Methylation increases the termination efficiency of RF2.

The protein localises to the cytoplasm. In terms of biological role, peptide chain release factor 2 directs the termination of translation in response to the peptide chain termination codons UGA and UAA. This Thermosipho africanus (strain TCF52B) protein is Peptide chain release factor 2.